The following is a 247-amino-acid chain: Protein At-4/1 (247 aa).

2 coiled-coil regions span residues 39-126 (VESS…YKIR) and 182-247 (LLME…LSSS).

Interacts with viral tomato spotted wilt virus (TSWV) movement protein NSM, which is involved in cell-to cell spread of viral genome and enlargement of the host plasmodesmata size exclusion limit (SEL). As to expression, expressed in leaves (at protein level).

The protein localises to the endoplasmic reticulum. It is found in the cell junction. The protein resides in the plasmodesma. Its function is as follows. Involved in intra- and inter-cellular trafficking through plasmodesmata (PD). The polypeptide is Protein At-4/1 (Arabidopsis thaliana (Mouse-ear cress)).